Here is a 216-residue protein sequence, read N- to C-terminus: Fibroblast growth factor 19 (216 aa).

An N-terminal signal peptide occupies residues 1–24 (MRSGCVVVHVWILAGLWLAVAGRP). Cystine bridges form between C58–C70 and C102–C120.

The protein belongs to the heparin-binding growth factors family. Interacts with FGFR1, FGFR2, FGFR3 and FGFR4. Affinity between fibroblast growth factors (FGFs) and their receptors is increased by KL, KLB and heparan sulfate glycosaminoglycans that function as coreceptors. Interacts with KL; this interaction is direct. Interacts with KLB; this interaction is direct. Interacts with FGFR4 in the presence of heparin, KL or KLB. Interacts with MALRD1. As to expression, expressed in fetal brain, cartilage, retina, and adult gall bladder.

It localises to the secreted. In terms of biological role, involved in the suppression of bile acid biosynthesis through down-regulation of CYP7A1 expression, following positive regulation of the JNK and ERK1/2 cascades. Stimulates glucose uptake in adipocytes. Activity requires the presence of KLB and FGFR4. The polypeptide is Fibroblast growth factor 19 (FGF19) (Homo sapiens (Human)).